Reading from the N-terminus, the 859-residue chain is MALGDKNQGSSKSQAKQKGTKGKNAQPRLKSNQLKRLKINEELKELQSRVDNFVPPSEITLFSELPMSSKTQKGLKSSHFLNPTPIQSLAIPPALQARDILGSAKTGSGKTLAFLIPLLERLYLEKWGPMDGLGAVVISPTRELAVQTFMQLRDIGKYHNFSAGLVIGGKPLKEEQERLGRMNILIATPGRLLQHLDSTVGFDSSAVKVLVLDEADRLLDLGFLPALKAIVSHFSPVQTAPGSRPSRQTLLFSATQSKDLAALAKLSLYEPLYISCNKPGEEGVMPANLEQYYAVVPLERKLDALWGFVKSHLKMKGIVFVTSGKQARRVRFIFETFRRLHPGLPLMHLHGKQKQPTRLDIFQRFSSSKSALLICTDVAARGLDFPAVDWVIQLDCPDDVDTYIHRVGRTARYQSAGTALTILCPSEEEGMKTRWGEKAIEVKRIKIKEGKMGNLKQSMQNFAFKEPEIKYLGQRAFISYMKSVHIQKDKSIFKIDALPAEAFAESMGLPGAPQIKLGNQKAAKVRGPSKEELARKAEKEEEEEEERAVVGSDEESEEDESEGLGSEDEEEEIDDEAEEIDDEEESGEESGSDEETEEEKDASKPKAPAVRTKYDRMFERKNQSILTPHYTALIAHDADNAAGAGEADDDDDVFTLARRDHNLSDDEEADTDAILGAEALAAELKKPLITSEDLSKRKLKAAASKKGLLKSRPGPEKVLFDEETGEAREFYKSGVDVEKEMSAADKRREYLEKEREIMKIQDKIDKEVAREKKKELKRKRKERERELRQMEMGDEPVAYLGGDDDYASADEGRSLSPSPAPSLEPERHAKKQRRGGVQESGAGDLEDEEALALRLLQGS.

Residues Met1–Leu34 form a disordered region. The segment covering Asn7–Gln17 has biased composition (polar residues). Positions Thr60–Ser88 match the Q motif motif. Positions Ile91–Ile274 constitute a Helicase ATP-binding domain. Ala104 to Thr111 contacts ATP. The short motif at Asp213–Asp216 is the DEAD box element. The region spanning Asn288–Ala463 is the Helicase C-terminal domain. 2 disordered regions span residues Ala512–Asp615 and Glu771–Ser859. A compositionally biased stretch (basic and acidic residues) spans Pro528 to Lys539. Positions Glu540–Lys600 are enriched in acidic residues. Positions Ser814–Leu823 are enriched in low complexity.

Belongs to the DEAD box helicase family. DDX10/DBP4 subfamily. As to quaternary structure, interacts with the U3 and U14 snoRNAs. Associates with pre-ribosomal complexes.

It localises to the nucleus. The protein localises to the nucleolus. It catalyses the reaction ATP + H2O = ADP + phosphate + H(+). Its function is as follows. ATP-dependent RNA helicase required for ribosome biogenesis. Involved in the release of U14 snoRNA in pre-ribosomal complexes. Required for pre-rRNA cleavage at site A2. This chain is ATP-dependent RNA helicase DBP4 (DBP4), found in Cryptococcus neoformans var. neoformans serotype D (strain B-3501A) (Filobasidiella neoformans).